Here is an 874-residue protein sequence, read N- to C-terminus: Alanine--tRNA ligase (874 aa).

Positions 562, 566, 665, and 669 each coordinate Zn(2+).

Belongs to the class-II aminoacyl-tRNA synthetase family. Requires Zn(2+) as cofactor.

The protein localises to the cytoplasm. The catalysed reaction is tRNA(Ala) + L-alanine + ATP = L-alanyl-tRNA(Ala) + AMP + diphosphate. Functionally, catalyzes the attachment of alanine to tRNA(Ala) in a two-step reaction: alanine is first activated by ATP to form Ala-AMP and then transferred to the acceptor end of tRNA(Ala). Also edits incorrectly charged Ser-tRNA(Ala) and Gly-tRNA(Ala) via its editing domain. The protein is Alanine--tRNA ligase of Pseudomonas syringae pv. syringae (strain B728a).